Consider the following 439-residue polypeptide: Forkhead box protein J1-A (439 aa).

A DNA-binding region (fork-head) is located at residues 124 to 218; that stretch reads KPPYSYATLI…INGAMKKRRL (95 aa). The tract at residues 273-293 is disordered; the sequence is EHGWNSISDGKSHKRKQPLPK. A compositionally biased stretch (basic residues) spans 284-293; sequence SHKRKQPLPK.

The protein belongs to the FOXJ1 family. In terms of tissue distribution, expressed in two independent areas of stage 10-11 embryos; in the dorsal blastopore lip (Spemann organizer) and shortly after in the ectodermal cells of the animal cap. As development proceeds, cells of the animal cap contribute to the epidermis and show a spotty pattern, which suggests expression in ciliated epidermal cells. Distribution of these cells is uniform in the trunk area of the embryo but more random in the head, being practically absent in the cement gland and olfactory placode. The spotted pattern becomes more dispersed as embryos grow in size. Due to cell movements during gastrulation, expression in the dorsal lip becomes located in the dorsal midline with expression restricted to the neuroectoderm. Expressed transiently in cells of the newly formed neural floor plate in the tail of older tadpoles.

The protein localises to the nucleus. Functionally, key transcription factor required for motile ciliogenesis. Activates genes essential for motile cilia formation and function. Required for ciliogenesis in multiciliated cells. This is Forkhead box protein J1-A (foxj1-a) from Xenopus laevis (African clawed frog).